We begin with the raw amino-acid sequence, 142 residues long: Large ribosomal subunit protein uL16 (142 aa).

The span at 1–14 shows a compositional bias: basic residues; that stretch reads MLSPRRTKFRKQQR. Residues 1 to 22 are disordered; it reads MLSPRRTKFRKQQRGRMTGKAT.

The protein belongs to the universal ribosomal protein uL16 family. In terms of assembly, part of the 50S ribosomal subunit.

In terms of biological role, binds 23S rRNA and is also seen to make contacts with the A and possibly P site tRNAs. The polypeptide is Large ribosomal subunit protein uL16 (Synechococcus elongatus (strain ATCC 33912 / PCC 7942 / FACHB-805) (Anacystis nidulans R2)).